A 262-amino-acid chain; its full sequence is Acetylglutamate kinase (262 aa).

Substrate-binding positions include 48 to 49, arginine 70, and asparagine 162; that span reads GG.

It belongs to the acetylglutamate kinase family. ArgB subfamily.

It is found in the cytoplasm. It catalyses the reaction N-acetyl-L-glutamate + ATP = N-acetyl-L-glutamyl 5-phosphate + ADP. The protein operates within amino-acid biosynthesis; L-arginine biosynthesis; N(2)-acetyl-L-ornithine from L-glutamate: step 2/4. Functionally, catalyzes the ATP-dependent phosphorylation of N-acetyl-L-glutamate. This is Acetylglutamate kinase from Vibrio cholerae serotype O1 (strain ATCC 39541 / Classical Ogawa 395 / O395).